The chain runs to 152 residues: 3-dehydroquinate dehydratase (152 aa).

The active-site Proton acceptor is Tyr-25. The substrate site is built by Asn-76, His-82, and Asp-89. The active-site Proton donor is His-102. Substrate-binding positions include 103 to 104 (LS) and Arg-113.

This sequence belongs to the type-II 3-dehydroquinase family. Homododecamer.

The catalysed reaction is 3-dehydroquinate = 3-dehydroshikimate + H2O. The protein operates within metabolic intermediate biosynthesis; chorismate biosynthesis; chorismate from D-erythrose 4-phosphate and phosphoenolpyruvate: step 3/7. Its function is as follows. Catalyzes a trans-dehydration via an enolate intermediate. This Gloeothece citriformis (strain PCC 7424) (Cyanothece sp. (strain PCC 7424)) protein is 3-dehydroquinate dehydratase.